Consider the following 98-residue polypeptide: MNIKLTQKAVEWFKNELDLPISNKVLQFYVKYGGEFQLKQGFSPAFTVENKDAIDIGFEQTFYEINVVIAEKDLWYFQDEKLTVDAIDHEDEIIYKRN.

The protein belongs to the HesB/IscA family.

This is an uncharacterized protein from Staphylococcus epidermidis (strain ATCC 35984 / DSM 28319 / BCRC 17069 / CCUG 31568 / BM 3577 / RP62A).